The chain runs to 463 residues: Probable mannan endo-1,4-beta-mannosidase F (463 aa).

Residues 1 to 18 (MRSLSSIALLSVVGAASA) form the signal peptide. In terms of domain architecture, CBM1 spans 19–54 (QAGPWAQCGGKSFSGSSECASGWKCQELNEWFSQCV). The interval 57–78 (AESTTPTVSSTPTPTDAPSVSI) is disordered. Over residues 59 to 77 (STTPTVSSTPTPTDAPSVS) the composition is skewed to low complexity. A ser-rich linker region spans residues 75–118 (SVSITASATTGINKSISVSSASKSTPLPSSSSASPSPRPTGSGS). N87 carries N-linked (GlcNAc...) asparagine glycosylation. Positions 93 to 118 (SSASKSTPLPSSSSASPSPRPTGSGS) are enriched in low complexity. A disordered region spans residues 93-121 (SSASKSTPLPSSSSASPSPRPTGSGSFAK). Residues 119 to 463 (FAKADGLQFS…MDHMENVNKN (345 aa)) are catalytic. W171 and N285 together coordinate substrate. E286 acts as the Proton donor in catalysis. Residue Y361 participates in substrate binding. E395 serves as the catalytic Nucleophile. W424 is a substrate binding site.

Belongs to the glycosyl hydrolase 5 (cellulase A) family.

The protein resides in the secreted. The enzyme catalyses Random hydrolysis of (1-&gt;4)-beta-D-mannosidic linkages in mannans, galactomannans and glucomannans.. Its function is as follows. Endo-1,4-mannanase, a crucial enzyme for depolymerization of seed galactomannans and wood galactoglucomannans. This chain is Probable mannan endo-1,4-beta-mannosidase F (manF), found in Aspergillus flavus (strain ATCC 200026 / FGSC A1120 / IAM 13836 / NRRL 3357 / JCM 12722 / SRRC 167).